The following is a 473-amino-acid chain: H(+)/Cl(-) exchange transporter ClcA (473 aa).

Over 1-32 (MKTDTSTFLAQQIVRLRRRDQIRRLMQRDKTP) the chain is Cytoplasmic. Residues 33–69 (LAILFMAAVVGTLTGLVGVAFEKAVSWVQNMRIGALV) traverse the membrane as a helical segment. The Periplasmic segment spans residues 70–76 (QVADHAF). A helical transmembrane segment spans residues 77–100 (LLWPLAFILSALLAMVGYFLVRKF). Residues 106–110 (GSGIP) carry the Selectivity filter part_1 motif. A chloride-binding site is contributed by S107. Positions 109–116 (IPEIEGAL) form an intramembrane region, helical. Residues 117 to 123 (EELRPVR) lie on the Cytoplasmic side of the membrane. Transmembrane regions (helical) follow at residues 124-141 (WWRVLPVKFIGGMGTLGA) and 148-166 (EGPTVQIGGNLGRMVLDVF). Positions 146–150 (GREGP) match the Selectivity filter part_2 motif. At 167 to 176 (RMRSAEARHT) the chain is on the cytoplasmic side. 2 consecutive intramembrane regions (helical) follow at residues 177–189 (LLATGAAAGLSAA) and 193–201 (PLAGILFII). At 202-214 (EEMRPQFRYNLIS) the chain is on the cytoplasmic side. A helical membrane pass occupies residues 215–232 (IKAVFTGVIMSSIVFRIF). The Periplasmic segment spans residues 233-252 (NGEAPIIEVGKLSDAPVNTL). A helical membrane pass occupies residues 253–281 (WLYLILGIIFGCVGPVFNSLVLRTQDMFQ). The Cytoplasmic segment spans residues 282 to 287 (RFHGGE). The helical transmembrane segment at 288–309 (IKKWVLMGGAIGGLCGILGLIE) threads the bilayer. Residues 310–329 (PEAAGGGFNLIPIAAAGNFS) are Periplasmic-facing. Helical transmembrane passes span 330–349 (VGLLLFIFIARVVTTLLCFS) and 355–376 (GIFAPMLALGTLLGTAFGMAAA). The Selectivity filter part_3 motif lies at 355–359 (GIFAP). 2 residues coordinate chloride: I356 and F357. Topologically, residues 377–386 (VLFPQYHLEA) are periplasmic. The segment at residues 387-401 (GTFAIAGMGALMAAS) is an intramembrane region (helical). The segment at residues 402-404 (VRA) is an intramembrane region (note=Loop between two helices). The segment at residues 405–416 (PLTGIVLVLEMT) is an intramembrane region (helical). An intramembrane region (note=Loop between two helices) is located at residues 417-421 (DNYQL). The helical transmembrane segment at 422-438 (ILPMIITCLGATLLAQF) threads the bilayer. Residues 439–473 (LGGKPLYSTILARTLAKQDAEQAAKNQNAPAGENT) are Cytoplasmic-facing. Y445 is a chloride binding site.

It belongs to the chloride channel (TC 2.A.49) family. ClcA subfamily. Homodimer.

Its subcellular location is the cell inner membrane. The catalysed reaction is 2 chloride(in) + H(+)(out) = 2 chloride(out) + H(+)(in). Its function is as follows. Proton-coupled chloride transporter. Functions as antiport system and exchanges two chloride ions for 1 proton. Probably acts as an electrical shunt for an outwardly-directed proton pump that is linked to amino acid decarboxylation, as part of the extreme acid resistance (XAR) response. This chain is H(+)/Cl(-) exchange transporter ClcA, found in Salmonella agona (strain SL483).